A 425-amino-acid chain; its full sequence is Serine--tRNA ligase 2 (425 aa).

230–232 (TAE) serves as a coordination point for L-serine. 261–263 (REE) contacts ATP. Glutamate 284 is an L-serine binding site. ATP is bound at residue 348-351 (EISS). Position 383 (serine 383) interacts with L-serine.

Belongs to the class-II aminoacyl-tRNA synthetase family. Type-1 seryl-tRNA synthetase subfamily. As to quaternary structure, homodimer. The tRNA molecule binds across the dimer.

Its subcellular location is the cytoplasm. The enzyme catalyses tRNA(Ser) + L-serine + ATP = L-seryl-tRNA(Ser) + AMP + diphosphate + H(+). It catalyses the reaction tRNA(Sec) + L-serine + ATP = L-seryl-tRNA(Sec) + AMP + diphosphate + H(+). It participates in aminoacyl-tRNA biosynthesis; selenocysteinyl-tRNA(Sec) biosynthesis; L-seryl-tRNA(Sec) from L-serine and tRNA(Sec): step 1/1. Functionally, catalyzes the attachment of serine to tRNA(Ser). Is also able to aminoacylate tRNA(Sec) with serine, to form the misacylated tRNA L-seryl-tRNA(Sec), which will be further converted into selenocysteinyl-tRNA(Sec). This chain is Serine--tRNA ligase 2, found in Lactiplantibacillus plantarum (strain ATCC BAA-793 / NCIMB 8826 / WCFS1) (Lactobacillus plantarum).